The primary structure comprises 20 residues: Protein PR-L5 (20 aa).

Belongs to the BetVI family.

In Lupinus luteus (European yellow lupine), this protein is Protein PR-L5.